A 303-amino-acid polypeptide reads, in one-letter code: Cyclin-dependent kinase 4 (303 aa).

A2 bears the N-acetylalanine mark. A Protein kinase domain is found at 6 to 295 (YEPVAEIGVG…AFRALQHSYL (290 aa)). Residues 12-20 (IGVGAYGTV) and K35 each bind ATP. Positions 50–56 (PVSTVRE) are required for binding D-type cyclins. The Proton acceptor role is filled by D140. The residue at position 172 (T172) is a Phosphothreonine; by CAK. Residue S300 is modified to Phosphoserine.

This sequence belongs to the protein kinase superfamily. CMGC Ser/Thr protein kinase family. CDC2/CDKX subfamily. In terms of assembly, component of the D-CDK4 complex, composed of CDK4 and some D-type G1 cyclin (CCND1, CCND2 or CCND3). Interacts directly in the complex with CCND1, CCND2 or CCND3. Interacts with ZNF655. Forms a ternary complex, cyclin D-CDK4-CDKN1B, involved in modulating CDK4 enzymatic activity. Interacts directly with CDKN1B (phosphorylated on 'Tyr-88' and 'Tyr-89'); the interaction allows assembly of the cyclin D-CDK4 complex, Thr-172 phosphorylation, nuclear translocation and enhances the cyclin D-CDK4 complex activity. CDK4 activity is either inhibited or enhanced depending on stoichiometry of complex. The non-tyrosine-phosphorylated form of CDKN1B prevents T-loop phosphorylation of CDK4 producing inactive CDK4. Interacts (unphosphorylated form) with CDK2. Also forms ternary complexes with CDKN1A or CDKN2A. Interacts directly with CDKN1A (via its N-terminal); the interaction promotes the assembly of the cyclin D-CDK4 complex, its nuclear translocation and promotes the cyclin D-dependent enzyme activity of CDK4. Interacts with CCND1; the interaction is prevented with the binding of CCND1 to INSM1 during cell cycle progression. Interacts with SEI1 and CCND1. Probably forms a complex composed of chaperones HSP90 and HSP70, co-chaperones CDC37, PPP5C, TSC1 and client protein TSC2, CDK4, AKT, RAF1 and NR3C1; this complex does not contain co-chaperones STIP1/HOP and PTGES3/p23. Interacts with CEBPA (when phosphorylated). Interacts with FNIP1 and FNIP2. Phosphorylation at Thr-172 is required for enzymatic activity. Phosphorylated, in vitro, at this site by CCNH-CDK7, but, in vivo, appears to be phosphorylated by a proline-directed kinase. In the cyclin D-CDK4-CDKN1B complex, this phosphorylation and consequent CDK4 enzyme activity, is dependent on the tyrosine phosphorylation state of CDKN1B. Thus, in proliferating cells, CDK4 within the complex is phosphorylated on Thr-172 in the T-loop. In resting cells, phosphorylation on Thr-172 is prevented by the non-tyrosine-phosphorylated form of CDKN1B.

Its subcellular location is the cytoplasm. It localises to the nucleus. The protein localises to the nucleus membrane. The catalysed reaction is L-seryl-[protein] + ATP = O-phospho-L-seryl-[protein] + ADP + H(+). The enzyme catalyses L-threonyl-[protein] + ATP = O-phospho-L-threonyl-[protein] + ADP + H(+). Its activity is regulated as follows. Both phosphorylation at Thr-172 and binding of a D-type cyclin are necessary for enzymatic activity. Full activation of the cyclin-D-CDK4 complex appears to require other factors such as recruitment of the substrate via a substrate recruitment motif, and/or formation of the CDKN1B ternary complex. Inhibited by INK4 family members. In resting cells, the non-tyrosine-phosphorylated form of CDKN1B prevents phosphorylation at Thr-172 and inactivation, while, in proliferating cells, tyrosine phosphorylation of CDKN1B allows phosphorylation of Thr-172 of CDK4 and subsequent activation. Ser/Thr-kinase component of cyclin D-CDK4 (DC) complexes that phosphorylate and inhibit members of the retinoblastoma (RB) protein family including RB1 and regulate the cell-cycle during G(1)/S transition. Phosphorylation of RB1 allows dissociation of the transcription factor E2F from the RB/E2F complexes and the subsequent transcription of E2F target genes which are responsible for the progression through the G(1) phase. Hypophosphorylates RB1 in early G(1) phase. Cyclin D-CDK4 complexes are major integrators of various mitogenenic and antimitogenic signals. Also phosphorylates SMAD3 in a cell-cycle-dependent manner and represses its transcriptional activity. Component of the ternary complex, cyclin D/CDK4/CDKN1B, required for nuclear translocation and activity of the cyclin D-CDK4 complex. The chain is Cyclin-dependent kinase 4 (Cdk4) from Mus musculus (Mouse).